Here is a 483-residue protein sequence, read N- to C-terminus: Islet cell autoantigen 1 (483 aa).

The AH domain maps to 51-254 (ASDADLDAKL…TSHTMAAIHE (204 aa)). The interval 281 to 321 (EEKKKINQQESTDAAVQEPSQLISLEEENQRKESSSFKTED) is disordered. Over residues 288–303 (QQESTDAAVQEPSQLI) the composition is skewed to polar residues. Over residues 308–321 (ENQRKESSSFKTED) the composition is skewed to basic and acidic residues.

Expressed abundantly in pancreas, heart and brain with low levels of expression in lung, kidney, liver and thyroid.

Its subcellular location is the cytoplasm. It localises to the cytosol. It is found in the golgi apparatus membrane. The protein resides in the cytoplasmic vesicle. The protein localises to the secretory vesicle membrane. Its subcellular location is the secretory vesicle. It localises to the synaptic vesicle membrane. In terms of biological role, may play a role in neurotransmitter secretion. This is Islet cell autoantigen 1 (ICA1) from Homo sapiens (Human).